Reading from the N-terminus, the 499-residue chain is Glycerol kinase (499 aa).

Residue Thr12 coordinates ADP. The ATP site is built by Thr12, Thr13, and Ser14. Thr12 contributes to the sn-glycerol 3-phosphate binding site. Residue Arg16 coordinates ADP. Sn-glycerol 3-phosphate-binding residues include Arg82, Glu83, and Tyr134. Residues Arg82, Glu83, and Tyr134 each contribute to the glycerol site. A Phosphohistidine; by HPr modification is found at His230. A sn-glycerol 3-phosphate-binding site is contributed by Asp244. Glycerol contacts are provided by Asp244 and Gln245. ADP is bound by residues Thr266 and Gly309. Positions 266, 309, 313, and 410 each coordinate ATP. ADP is bound by residues Gly410 and Asn414.

Belongs to the FGGY kinase family. In terms of assembly, homotetramer and homodimer (in equilibrium). In terms of processing, the phosphoenolpyruvate-dependent sugar phosphotransferase system (PTS), including enzyme I, and histidine-containing protein (HPr) are required for the phosphorylation, which leads to the activation of the enzyme.

It catalyses the reaction glycerol + ATP = sn-glycerol 3-phosphate + ADP + H(+). It functions in the pathway polyol metabolism; glycerol degradation via glycerol kinase pathway; sn-glycerol 3-phosphate from glycerol: step 1/1. Its activity is regulated as follows. Activated by phosphorylation and inhibited by fructose 1,6-bisphosphate (FBP). Key enzyme in the regulation of glycerol uptake and metabolism. Catalyzes the phosphorylation of glycerol to yield sn-glycerol 3-phosphate. The polypeptide is Glycerol kinase (Staphylococcus haemolyticus (strain JCSC1435)).